The following is a 248-amino-acid chain: NH(3)-dependent NAD(+) synthetase (248 aa).

31–38 is a binding site for ATP; it reads GLSGGVDS. Asp37 provides a ligand contact to Mg(2+). Arg114 is a deamido-NAD(+) binding site. Thr134 contacts ATP. Glu139 contacts Mg(2+). The deamido-NAD(+) site is built by Lys147 and Asp154. Residues Lys163 and Thr185 each contribute to the ATP site. 232–233 provides a ligand contact to deamido-NAD(+); sequence HK.

This sequence belongs to the NAD synthetase family. Homodimer.

The enzyme catalyses deamido-NAD(+) + NH4(+) + ATP = AMP + diphosphate + NAD(+) + H(+). It participates in cofactor biosynthesis; NAD(+) biosynthesis; NAD(+) from deamido-NAD(+) (ammonia route): step 1/1. Functionally, catalyzes the ATP-dependent amidation of deamido-NAD to form NAD. Uses ammonia as a nitrogen source. The polypeptide is NH(3)-dependent NAD(+) synthetase (Mycoplasma pneumoniae (strain ATCC 29342 / M129 / Subtype 1) (Mycoplasmoides pneumoniae)).